Here is a 203-residue protein sequence, read N- to C-terminus: NAD(P)H dehydrogenase (quinone) (203 aa).

Positions 3–194 (VLIAYYSMYG…AAARYQGKHV (192 aa)) constitute a Flavodoxin-like domain. FMN contacts are provided by residues 9–14 (SMYGHI) and 82–84 (TRF). An NAD(+)-binding site is contributed by tyrosine 11. Position 102 (tryptophan 102) interacts with substrate. Residues 117 to 123 (SSATQHG) and histidine 138 each bind FMN.

It belongs to the WrbA family. FMN is required as a cofactor.

The enzyme catalyses a quinone + NADH + H(+) = a quinol + NAD(+). It catalyses the reaction a quinone + NADPH + H(+) = a quinol + NADP(+). The protein is NAD(P)H dehydrogenase (quinone) of Geotalea uraniireducens (strain Rf4) (Geobacter uraniireducens).